A 216-amino-acid polypeptide reads, in one-letter code: Cytidylate kinase (216 aa).

Position 7–15 (7–15 (GPSGTGKST)) interacts with ATP.

This sequence belongs to the cytidylate kinase family. Type 1 subfamily.

It is found in the cytoplasm. It carries out the reaction CMP + ATP = CDP + ADP. The catalysed reaction is dCMP + ATP = dCDP + ADP. The chain is Cytidylate kinase from Chlamydia caviae (strain ATCC VR-813 / DSM 19441 / 03DC25 / GPIC) (Chlamydophila caviae).